The chain runs to 75 residues: Small ribosomal subunit protein bS18 (75 aa).

This sequence belongs to the bacterial ribosomal protein bS18 family. In terms of assembly, part of the 30S ribosomal subunit. Forms a tight heterodimer with protein bS6.

Binds as a heterodimer with protein bS6 to the central domain of the 16S rRNA, where it helps stabilize the platform of the 30S subunit. This chain is Small ribosomal subunit protein bS18, found in Thermotoga maritima (strain ATCC 43589 / DSM 3109 / JCM 10099 / NBRC 100826 / MSB8).